The sequence spans 191 residues: Protein Ves (191 aa).

This sequence belongs to the Ves family.

The sequence is that of Protein Ves from Shigella boydii serotype 18 (strain CDC 3083-94 / BS512).